Here is a 229-residue protein sequence, read N- to C-terminus: Small ribosomal subunit protein uS3 (229 aa).

In terms of domain architecture, KH type-2 spans 39–107; the sequence is IRKFLKKELY…EVFINIKEEK (69 aa).

The protein belongs to the universal ribosomal protein uS3 family. Part of the 30S ribosomal subunit. Forms a tight complex with proteins S10 and S14.

Its function is as follows. Binds the lower part of the 30S subunit head. Binds mRNA in the 70S ribosome, positioning it for translation. The protein is Small ribosomal subunit protein uS3 of Nitratiruptor sp. (strain SB155-2).